Reading from the N-terminus, the 79-residue chain is Cyclotide phyb-A (79 aa).

Residues 1–43 (MVGVNSLRSALYLIVLILFVQLTYFSDARVMDVDLSRAFLPLT) constitute a propeptide that is removed on maturation. Residues 44–73 (GIGCGESCVWIPCVSAAIGCSCSNKICYRN) constitute a cross-link (cyclopeptide (Gly-Asn)). 3 disulfide bridges follow: C47-C63, C51-C65, and C56-C70. A propeptide spanning residues 74-79 (GIIPKK) is cleaved from the precursor.

In terms of processing, this is a cyclic peptide. Post-translationally, contains 3 disulfide bonds. Expressed in midvein, lamina and periphery of leaves (at protein level).

Functionally, probably participates in a plant defense mechanism. This Petunia hybrida (Petunia) protein is Cyclotide phyb-A.